We begin with the raw amino-acid sequence, 229 residues long: MGGILKNPLALSPEQLAQQDPETLEEFRRQVYENTQKNAKLTSHKRNIPGLDNTKEEGEIIGTSSTFLPKDTLSLKHEQDMLAKMTPEERVQWNQRNLAENEITKKQFQDIHIDEPKTPYQGAVDPHGEYYRVDDDEDEDNSDKKPCQVANDDIDDLSLGEPEFEIKENKQPDFETNDENDEDSPEARHKKFEEMRKKHYDVRAIFNKKSREALKDEDEDEDDSTTKEP.

3 disordered regions span residues Met-1–Pro-21, Thr-35–Gly-62, and Gln-107–Pro-229. At Ser-12 the chain carries Phosphoserine. Positions Gln-107–Lys-117 are enriched in basic and acidic residues. Position 118 is a phosphothreonine; by PHO85 (Thr-118). Ser-158 bears the Phosphoserine mark. Residues Phe-164–Asp-173 are compositionally biased toward basic and acidic residues. Residues Glu-175–Ser-184 show a composition bias toward acidic residues. Ser-184 bears the Phosphoserine mark. Residues Pro-185–Arg-196 are compositionally biased toward basic and acidic residues.

Post-translationally, phosphorylated by the cyclin-CDKs PCL6-PHO85 and PCL7-PHO85. Phosphorylation of Thr-118 inactivates GLC8.

Its function is as follows. Modulator of GLC7 type-1 protein phosphatase. The polypeptide is Protein GLC8 (GLC8) (Saccharomyces cerevisiae (strain ATCC 204508 / S288c) (Baker's yeast)).